Consider the following 185-residue polypeptide: Ribosome-recycling factor (185 aa).

The tract at residues 141–160 is disordered; that stretch reads RIQKDGEAGEDEVGRAEKEL.

Belongs to the RRF family.

It is found in the cytoplasm. Its function is as follows. Responsible for the release of ribosomes from messenger RNA at the termination of protein biosynthesis. May increase the efficiency of translation by recycling ribosomes from one round of translation to another. The sequence is that of Ribosome-recycling factor from Rhodococcus jostii (strain RHA1).